Consider the following 165-residue polypeptide: 3-hydroxyacyl-[acyl-carrier-protein] dehydratase FabZ (165 aa).

His64 is a catalytic residue.

The protein belongs to the thioester dehydratase family. FabZ subfamily.

The protein resides in the cytoplasm. It catalyses the reaction a (3R)-hydroxyacyl-[ACP] = a (2E)-enoyl-[ACP] + H2O. Functionally, involved in unsaturated fatty acids biosynthesis. Catalyzes the dehydration of short chain beta-hydroxyacyl-ACPs and long chain saturated and unsaturated beta-hydroxyacyl-ACPs. The sequence is that of 3-hydroxyacyl-[acyl-carrier-protein] dehydratase FabZ from Acidiphilium cryptum (strain JF-5).